A 438-amino-acid polypeptide reads, in one-letter code: Enolase (438 aa).

Gln-174 contributes to the (2R)-2-phosphoglycerate binding site. Catalysis depends on Glu-216, which acts as the Proton donor. Mg(2+) is bound by residues Asp-253, Glu-297, and Asp-324. (2R)-2-phosphoglycerate is bound by residues Lys-349, Arg-378, Ser-379, and Lys-400. Residue Lys-349 is the Proton acceptor of the active site.

Belongs to the enolase family. Component of the RNA degradosome, a multiprotein complex involved in RNA processing and mRNA degradation. The cofactor is Mg(2+).

It is found in the cytoplasm. It localises to the secreted. Its subcellular location is the cell surface. It carries out the reaction (2R)-2-phosphoglycerate = phosphoenolpyruvate + H2O. It functions in the pathway carbohydrate degradation; glycolysis; pyruvate from D-glyceraldehyde 3-phosphate: step 4/5. In terms of biological role, catalyzes the reversible conversion of 2-phosphoglycerate (2-PG) into phosphoenolpyruvate (PEP). It is essential for the degradation of carbohydrates via glycolysis. The protein is Enolase of Psychrobacter sp. (strain PRwf-1).